The sequence spans 310 residues: Protein-L-isoaspartate O-methyltransferase (310 aa).

The segment at 1-41 is disordered; that stretch reads MSGERAKRFPLALEDLKRAPRKSEGRPGERQTAGAVPKAAD. Residues 14–29 are compositionally biased toward basic and acidic residues; the sequence is EDLKRAPRKSEGRPGE. Serine 157 is an active-site residue.

Belongs to the methyltransferase superfamily. L-isoaspartyl/D-aspartyl protein methyltransferase family.

Its subcellular location is the cytoplasm. It carries out the reaction [protein]-L-isoaspartate + S-adenosyl-L-methionine = [protein]-L-isoaspartate alpha-methyl ester + S-adenosyl-L-homocysteine. Functionally, catalyzes the methyl esterification of L-isoaspartyl residues in peptides and proteins that result from spontaneous decomposition of normal L-aspartyl and L-asparaginyl residues. It plays a role in the repair and/or degradation of damaged proteins. In Burkholderia cenocepacia (strain HI2424), this protein is Protein-L-isoaspartate O-methyltransferase.